We begin with the raw amino-acid sequence, 109 residues long: UPF0154 protein UPA3_0273 (109 aa).

A helical membrane pass occupies residues 42-62 (VGLGIGIVLFLIAGLIIGYFI).

Belongs to the UPF0154 family.

It localises to the cell membrane. This Ureaplasma parvum serovar 3 (strain ATCC 27815 / 27 / NCTC 11736) protein is UPF0154 protein UPA3_0273.